Consider the following 289-residue polypeptide: 2,3-dimethylmalate lyase (289 aa).

This sequence belongs to the isocitrate lyase/PEP mutase superfamily. Homotetramer. The cofactor is Mg(2+).

The catalysed reaction is (2R,3S)-2,3-dimethylmalate = propanoate + pyruvate. The protein operates within cofactor degradation; nicotinate degradation; propanoate and pyruvate from 6-hydroxynicotinate: step 8/8. Its activity is regulated as follows. Completely inhibited by propionic anhydride and by cystamine. Irreversibly inhibited by the mercapto reagents iodoacetate and iodoacetamide. Unaffected by hydroxylamine. Catalyzes the formation of proponate and pyruvate from (2R,3S)-2,3-dimethylmalate. Has no activity toward dimethylmaleate, malate, citramalate, isocitrate and citrate. The chain is 2,3-dimethylmalate lyase from Eubacterium barkeri (Clostridium barkeri).